Reading from the N-terminus, the 321-residue chain is Lipoyl synthase (321 aa).

C68, C73, C79, C94, C98, C101, and S308 together coordinate [4Fe-4S] cluster. A Radical SAM core domain is found at 80–297 (FNHGTATFMI…KEIALELGFT (218 aa)).

It belongs to the radical SAM superfamily. Lipoyl synthase family. [4Fe-4S] cluster serves as cofactor.

It is found in the cytoplasm. It carries out the reaction [[Fe-S] cluster scaffold protein carrying a second [4Fe-4S](2+) cluster] + N(6)-octanoyl-L-lysyl-[protein] + 2 oxidized [2Fe-2S]-[ferredoxin] + 2 S-adenosyl-L-methionine + 4 H(+) = [[Fe-S] cluster scaffold protein] + N(6)-[(R)-dihydrolipoyl]-L-lysyl-[protein] + 4 Fe(3+) + 2 hydrogen sulfide + 2 5'-deoxyadenosine + 2 L-methionine + 2 reduced [2Fe-2S]-[ferredoxin]. It participates in protein modification; protein lipoylation via endogenous pathway; protein N(6)-(lipoyl)lysine from octanoyl-[acyl-carrier-protein]: step 2/2. In terms of biological role, catalyzes the radical-mediated insertion of two sulfur atoms into the C-6 and C-8 positions of the octanoyl moiety bound to the lipoyl domains of lipoate-dependent enzymes, thereby converting the octanoylated domains into lipoylated derivatives. In Aliivibrio fischeri (strain ATCC 700601 / ES114) (Vibrio fischeri), this protein is Lipoyl synthase.